The chain runs to 511 residues: MNDRLFIFDTTLRDGEQSPGASMTKDEKLRIARQLEKLGVDVIEAGFAAASPGDADAIRAIAETVRNSTVCSLARANERDIHAAGGAIKPAKSGRIHTFIATSPIHMEKKLRMQPDQVVEAAVKAVKLAREYTDDVEFSAEDAVRSDMDFLVRIFDEVIKAGAKTINVPDTVGYSIPALWGERMKALIERVPGSDKVIWSTHCHNDLGMAVANSLAAVMNGARQVECTINGLGERAGNASLEEIVMAVRTRRDVFGCDTRIDATQIVPSSKLVSTITGYPVQPNKAIVGANAFAHESGIHQDGVLKHRETYEIMRAEDVGWNANRLTLGKLSGRNAFKTKLAELGIVLDSEEALNAAFARFKDLADKKREIFDEDLQALVSDEGYATEDERFKLLSMKVCSETGEVPRAQLVFTDDGAEKQASGEGSGPVDATFKALESVVHSGADLLLYSVNNITSGTDAQGEVTVRLAQDGRVVNGQGADTDIVVASAKAYLHALNKLHSKRERAHPQV.

The 263-residue stretch at 5–267 (LFIFDTTLRD…DTRIDATQIV (263 aa)) folds into the Pyruvate carboxyltransferase domain. Positions 14, 202, 204, and 238 each coordinate Mn(2+). The tract at residues 393–511 (KLLSMKVCSE…SKRERAHPQV (119 aa)) is regulatory domain.

The protein belongs to the alpha-IPM synthase/homocitrate synthase family. LeuA type 1 subfamily. As to quaternary structure, homodimer. Mn(2+) serves as cofactor.

Its subcellular location is the cytoplasm. The catalysed reaction is 3-methyl-2-oxobutanoate + acetyl-CoA + H2O = (2S)-2-isopropylmalate + CoA + H(+). It participates in amino-acid biosynthesis; L-leucine biosynthesis; L-leucine from 3-methyl-2-oxobutanoate: step 1/4. Its function is as follows. Catalyzes the condensation of the acetyl group of acetyl-CoA with 3-methyl-2-oxobutanoate (2-ketoisovalerate) to form 3-carboxy-3-hydroxy-4-methylpentanoate (2-isopropylmalate). The polypeptide is 2-isopropylmalate synthase (Thiobacillus denitrificans (strain ATCC 25259 / T1)).